The chain runs to 177 residues: MKLQCVSLWLLGTILILCSVDNHGLRRCLISTDMHHIEESFQEIKRAIQAKDTFPNVTILSTLETLQIIKPLDVCCVTKNLLAFYVDRVFKDHQEPNPKILRKISSIANSFLYMQKTLRQCQEQRQCHCRQEATNATRVIHDNYDQLEVHAAAIKSLGELDVFLAWINKNHEVMFSA.

Residues 1 to 24 form the signal peptide; sequence MKLQCVSLWLLGTILILCSVDNHG. 3 disulfides stabilise this stretch: cysteine 28-cysteine 121, cysteine 75-cysteine 127, and cysteine 76-cysteine 129. A glycan (N-linked (GlcNAc...) asparagine) is linked at asparagine 56. An N-linked (GlcNAc...) asparagine glycan is attached at asparagine 135.

It belongs to the IL-10 family.

The protein resides in the secreted. In terms of biological role, cytokine that functions as an anti-inflammatory and proangiogenic factor. Polarizes adaptive immunity to an anti-inflammatory phenotype through induction of T-helper 2 responses by both down-regulation of IFN-gamma and up-regulation of IL4 and IL13. Produced by osteocytes, stimulates granulopoiesis and neutrophil formation. Exerts its biological effect through a receptor complex consisting of a heterodimer of IL20RA and IL20RB. In turn, activates the Janus kinase (JAK) and signal transducer and activator of transcription (STAT) pathway, and importantly, STAT3. This Homo sapiens (Human) protein is Interleukin-19 (IL19).